The following is a 547-amino-acid chain: Chaperonin GroEL (547 aa).

ATP-binding positions include 30 to 33, Lys51, 87 to 91, Gly415, 479 to 481, and Asp495; these read TLGP, DGTTT, and NAA.

It belongs to the chaperonin (HSP60) family. In terms of assembly, forms a cylinder of 14 subunits composed of two heptameric rings stacked back-to-back. Interacts with the co-chaperonin GroES.

The protein localises to the cytoplasm. It catalyses the reaction ATP + H2O + a folded polypeptide = ADP + phosphate + an unfolded polypeptide.. Its function is as follows. Together with its co-chaperonin GroES, plays an essential role in assisting protein folding. The GroEL-GroES system forms a nano-cage that allows encapsulation of the non-native substrate proteins and provides a physical environment optimized to promote and accelerate protein folding. In Pseudomonas syringae pv. syringae (strain B728a), this protein is Chaperonin GroEL.